Reading from the N-terminus, the 86-residue chain is Protein Tat (86 aa).

A disordered region spans residues 1–21; the sequence is MDPVDPNLEPWNHPGSQPKTA. The segment at 1-24 is interaction with human CREBBP; sequence MDPVDPNLEPWNHPGSQPKTACNR. The segment at 1–48 is transactivation; that stretch reads MDPVDPNLEPWNHPGSQPKTACNRCHCKKCCYHCQVCFITKGLGISYG. 3 residues coordinate Zn(2+): Cys-22, Cys-25, and Cys-27. Residues 22–37 are cysteine-rich; it reads CNRCHCKKCCYHCQVC. Lys-28 carries the post-translational modification N6-acetyllysine; by host PCAF. Residues Cys-30, His-33, Cys-34, and Cys-37 each coordinate Zn(2+). Residues 38–48 are core; sequence FITKGLGISYG. The disordered stretch occupies residues 47-86; the sequence is YGRKKRRQRRRPSQGGQTHQDPIPKQPSSQPRGNPTGPKE. A compositionally biased stretch (basic residues) spans 48–58; that stretch reads GRKKRRQRRRP. The short motif at 49–57 is the Nuclear localization signal, RNA-binding (TAR), and protein transduction element; sequence RKKRRQRRR. The segment at 49-86 is interaction with the host capping enzyme RNGTT; the sequence is RKKRRQRRRPSQGGQTHQDPIPKQPSSQPRGNPTGPKE. Residues Lys-50 and Lys-51 each carry the N6-acetyllysine; by host EP300 and GCN5L2 modification. 2 positions are modified to asymmetric dimethylarginine; by host PRMT6: Arg-52 and Arg-53. The segment covering 60 to 79 has biased composition (polar residues); it reads QGGQTHQDPIPKQPSSQPRG. Lys-71 participates in a covalent cross-link: Glycyl lysine isopeptide (Lys-Gly) (interchain with G-Cter in ubiquitin).

Belongs to the lentiviruses Tat family. As to quaternary structure, interacts with host CCNT1. Associates with the P-TEFb complex composed at least of Tat, P-TEFb (CDK9 and CCNT1), TAR RNA, RNA Pol II. Recruits the HATs CREBBP, TAF1/TFIID, EP300, PCAF and GCN5L2. Interacts with host KAT5/Tip60; this interaction targets the latter to degradation. Interacts with the host deacetylase SIRT1. Interacts with host capping enzyme RNGTT; this interaction stimulates RNGTT. Binds to host KDR, and to the host integrins ITGAV/ITGB3 and ITGA5/ITGB1. Interacts with host KPNB1/importin beta-1 without previous binding to KPNA1/importin alpha-1. Interacts with EIF2AK2. Interacts with host nucleosome assembly protein NAP1L1; this interaction may be required for the transport of Tat within the nucleus, since the two proteins interact at the nuclear rim. Interacts with host C1QBP/SF2P32; this interaction involves lysine-acetylated Tat. Interacts with the host chemokine receptors CCR2, CCR3 and CXCR4. Interacts with host DPP4/CD26; this interaction may trigger an anti-proliferative effect. Interacts with host LDLR. Interacts with the host extracellular matrix metalloproteinase MMP1. Interacts with host PRMT6; this interaction mediates Tat's methylation. Interacts with, and is ubiquitinated by MDM2/Hdm2. Interacts with host PSMC3 and HTATIP2. Interacts with STAB1; this interaction may overcome SATB1-mediated repression of IL2 and IL2RA (interleukin) in T cells by binding to the same domain than HDAC1. Interacts (when acetylated) with human CDK13, thereby increasing HIV-1 mRNA splicing and promoting the production of the doubly spliced HIV-1 protein Nef. Interacts with host TBP; this interaction modulates the activity of transcriptional pre-initiation complex. Interacts with host RELA. Interacts with host PLSCR1; this interaction negatively regulates Tat transactivation activity by altering its subcellular distribution. In terms of processing, asymmetrical arginine methylation by host PRMT6 seems to diminish the transactivation capacity of Tat and affects the interaction with host CCNT1. Acetylation by EP300, CREBBP, GCN5L2/GCN5 and PCAF regulates the transactivation activity of Tat. EP300-mediated acetylation of Lys-50 promotes dissociation of Tat from the TAR RNA through the competitive binding to PCAF's bromodomain. In addition, the non-acetylated Tat's N-terminus can also interact with PCAF. PCAF-mediated acetylation of Lys-28 enhances Tat's binding to CCNT1. Lys-50 is deacetylated by SIRT1. Post-translationally, polyubiquitination by host MDM2 does not target Tat to degradation, but activates its transactivation function and fosters interaction with CCNT1 and TAR RNA. In terms of processing, phosphorylated by EIF2AK2 on serine and threonine residues adjacent to the basic region important for TAR RNA binding and function. Phosphorylation of Tat by EIF2AK2 is dependent on the prior activation of EIF2AK2 by dsRNA.

The protein resides in the host nucleus. It localises to the host nucleolus. It is found in the host cytoplasm. The protein localises to the secreted. Its function is as follows. Transcriptional activator that increases RNA Pol II processivity, thereby increasing the level of full-length viral transcripts. Recognizes a hairpin structure at the 5'-LTR of the nascent viral mRNAs referred to as the transactivation responsive RNA element (TAR) and recruits the cyclin T1-CDK9 complex (P-TEFb complex) that will in turn hyperphosphorylate the RNA polymerase II to allow efficient elongation. The CDK9 component of P-TEFb and other Tat-activated kinases hyperphosphorylate the C-terminus of RNA Pol II that becomes stabilized and much more processive. Other factors such as HTATSF1/Tat-SF1, SUPT5H/SPT5, and HTATIP2 are also important for Tat's function. Besides its effect on RNA Pol II processivity, Tat induces chromatin remodeling of proviral genes by recruiting the histone acetyltransferases (HATs) CREBBP, EP300 and PCAF to the chromatin. This also contributes to the increase in proviral transcription rate, especially when the provirus integrates in transcriptionally silent region of the host genome. To ensure maximal activation of the LTR, Tat mediates nuclear translocation of NF-kappa-B by interacting with host RELA. Through its interaction with host TBP, Tat may also modulate transcription initiation. Tat can reactivate a latently infected cell by penetrating in it and transactivating its LTR promoter. In the cytoplasm, Tat is thought to act as a translational activator of HIV-1 mRNAs. Extracellular circulating Tat can be endocytosed by surrounding uninfected cells via the binding to several surface receptors such as CD26, CXCR4, heparan sulfate proteoglycans (HSPG) or LDLR. Neurons are rarely infected, but they internalize Tat via their LDLR. Through its interaction with nuclear HATs, Tat is potentially able to control the acetylation-dependent cellular gene expression. Modulates the expression of many cellular genes involved in cell survival, proliferation or in coding for cytokines or cytokine receptors. Tat plays a role in T-cell and neurons apoptosis. Tat induced neurotoxicity and apoptosis probably contribute to neuroAIDS. Circulating Tat also acts as a chemokine-like and/or growth factor-like molecule that binds to specific receptors on the surface of the cells, affecting many cellular pathways. In the vascular system, Tat binds to ITGAV/ITGB3 and ITGA5/ITGB1 integrins dimers at the surface of endothelial cells and competes with bFGF for heparin-binding sites, leading to an excess of soluble bFGF. In Homo sapiens (Human), this protein is Protein Tat.